A 726-amino-acid polypeptide reads, in one-letter code: Myb-like protein Z (726 aa).

4 disordered regions span residues 15 to 109 (DSND…SLSN), 124 to 149 (ASPS…YHPY), 161 to 239 (HYVS…TKQQ), and 272 to 303 (LIPS…NMRS). Residues 18 to 39 (DNNNNNNNNNNSNNNNNNNNNN) show a composition bias toward low complexity. Polar residues predominate over residues 45–80 (SSATSSPTGQDSTIDRPNSPSSSIKFTYPSKNSIVT). The span at 81-108 (SPSSLQLPSPSFSSSSSSSSSSSSSSLS) shows a compositional bias: low complexity. Over residues 124–147 (ASPSKSSENSPTIHTSSLSPNSYH) the composition is skewed to polar residues. A compositionally biased stretch (low complexity) spans 165 to 177 (NNNNNNNNNNNNN). Residues 183 to 209 (SSELYNTSPSISSKTTPNGSSTNNSPF) are compositionally biased toward polar residues. Positions 221–239 (NNNNNNNNDRNENNTTKQQ) are enriched in low complexity. A Myb-like domain is found at 329-388 (IPIATRKLWSQEECCRLLEMVFQRDPQSVTSKESELRWRSIASTLGRTVTSTRKKYMRLM). A compositionally biased stretch (low complexity) spans 516–651 (KQIQQQQKQK…NNNYRSSLSP (136 aa)). A disordered region spans residues 516 to 726 (KQIQQQQKQK…NNNNYNNYHN (211 aa)). A compositionally biased stretch (polar residues) spans 661–675 (QSPQQKSNNENQQNF). Residues 709–726 (NLNNNNNNNNNNYNNYHN) show a composition bias toward low complexity.

In Dictyostelium discoideum (Social amoeba), this protein is Myb-like protein Z (mybZ).